The primary structure comprises 472 residues: MAKKLEKIITRNENFADWYTSIVNNAKLIQYTDIKGMMVFQPNAWAIWEAIKNQIDLEFKKHGVRNLAMPTLIPLSEFQKEKDHIEGFAPELFMVNQIGDKKLDNPYAIRPTSEILFCNYFKNIVNSYNDLPIKNNQWCSVMRAEKTTRPFLRNAEFHWQELHAIFASEHEADEFAKTILDVYTDFVQNYLCIPVIKGLKTPWERFAGAQKTYTIEAMMQDGQALQSATSHYLGQFFAKAYDIKFQGQDNQMHYVHQMSAGLSTRIIGALIMVHADDQGLILPPDIAFNQIAILSIFANKNPQLLTISEQIRNELSDYRLFEDHSDKGVGYKLAQQEIEGTPICILVGVKELANQQVVLVRRDTHEKINVNLIDLKSTIKKLLLDIKTNIYQKAKKQLDESIVFVNSIEELKQVIAQNKMAKAFFDGSKEDDEQIKLLTNASTRCIFDETQSGQCFYTNKKTNKLTLFARAY.

It belongs to the class-II aminoacyl-tRNA synthetase family. ProS type 3 subfamily. Homodimer.

The protein localises to the cytoplasm. It catalyses the reaction tRNA(Pro) + L-proline + ATP = L-prolyl-tRNA(Pro) + AMP + diphosphate. In terms of biological role, catalyzes the attachment of proline to tRNA(Pro) in a two-step reaction: proline is first activated by ATP to form Pro-AMP and then transferred to the acceptor end of tRNA(Pro). This Ureaplasma urealyticum serovar 10 (strain ATCC 33699 / Western) protein is Proline--tRNA ligase.